The primary structure comprises 475 residues: Methyltransferase-like protein 25B (475 aa).

Positions 185 to 210 form a coiled coil; it reads NKRLVARAQRLDQELLQALDKMEKRH. The helical transmembrane segment at 406–426 threads the bilayer; sequence VVAFFSLALLLAPLVETLILL.

Belongs to the METTL25 family.

The protein localises to the membrane. The polypeptide is Methyltransferase-like protein 25B (Rattus norvegicus (Rat)).